The sequence spans 1291 residues: Tat-binding homolog 7 (1291 aa).

A disordered region spans residues 1-345; it reads MPRSDGFSPR…HNRGERERGR (345 aa). The span at 64 to 82 shows a compositional bias: basic and acidic residues; the sequence is RYYEEEYHEAISSEEDERR. The span at 88 to 99 shows a compositional bias: polar residues; it reads SSNSMTYRQQVM. A compositionally biased stretch (acidic residues) spans 226–257; it reads EEEEEGAEEDEQSGEKDPEEEEDDSSNAESSE. Over residues 298-311 the composition is skewed to basic residues; that stretch reads NRHHRNRNGSRRRR. 432–439 provides a ligand contact to ATP; sequence GPPGTGKT. Residues 914 to 1022 form the Bromo domain; sequence ALQRQMRLFF…DAIDDLIECE (109 aa). The interval 1110–1194 is disordered; the sequence is KSEEGTSTST…MKDASKDSTP (85 aa). Over residues 1128-1142 the composition is skewed to basic residues; the sequence is NKKKLLKKKKGQKKS. The segment covering 1148-1164 has biased composition (acidic residues); the sequence is EEHDEDSTVEDAGEDTI. A compositionally biased stretch (basic and acidic residues) spans 1168 to 1190; it reads LEIKKNQETPNSEHDIEMKDASK.

This sequence belongs to the AAA ATPase family.

Functionally, thought to form a complex that enhances transcription from repetitive DNA sequences by modulating chromatin structure. In Caenorhabditis elegans, this protein is Tat-binding homolog 7 (lex-1).